Reading from the N-terminus, the 276-residue chain is Large ribosomal subunit protein uL2 (276 aa).

The tract at residues 224–276 (AMNPIDHPHGGGEGKTSGGRNPVTPWGVSTKGKKTRKKNKSSNKYIKRVSDKG) is disordered. The segment covering 254-270 (KGKKTRKKNKSSNKYIK) has biased composition (basic residues).

It belongs to the universal ribosomal protein uL2 family. In terms of assembly, part of the 50S ribosomal subunit. Forms a bridge to the 30S subunit in the 70S ribosome.

Functionally, one of the primary rRNA binding proteins. Required for association of the 30S and 50S subunits to form the 70S ribosome, for tRNA binding and peptide bond formation. It has been suggested to have peptidyltransferase activity; this is somewhat controversial. Makes several contacts with the 16S rRNA in the 70S ribosome. The chain is Large ribosomal subunit protein uL2 from Ehrlichia ruminantium (strain Gardel).